Here is a 291-residue protein sequence, read N- to C-terminus: ATP phosphoribosyltransferase (291 aa).

Belongs to the ATP phosphoribosyltransferase family. Long subfamily. It depends on Mg(2+) as a cofactor.

It localises to the cytoplasm. It carries out the reaction 1-(5-phospho-beta-D-ribosyl)-ATP + diphosphate = 5-phospho-alpha-D-ribose 1-diphosphate + ATP. It functions in the pathway amino-acid biosynthesis; L-histidine biosynthesis; L-histidine from 5-phospho-alpha-D-ribose 1-diphosphate: step 1/9. Feedback inhibited by histidine. Its function is as follows. Catalyzes the condensation of ATP and 5-phosphoribose 1-diphosphate to form N'-(5'-phosphoribosyl)-ATP (PR-ATP). Has a crucial role in the pathway because the rate of histidine biosynthesis seems to be controlled primarily by regulation of HisG enzymatic activity. This is ATP phosphoribosyltransferase from Trichlorobacter lovleyi (strain ATCC BAA-1151 / DSM 17278 / SZ) (Geobacter lovleyi).